Here is a 348-residue protein sequence, read N- to C-terminus: Anthranilate phosphoribosyltransferase (348 aa).

Residues G81, 84–85, 91–94, 109–117, and S121 contribute to the 5-phospho-alpha-D-ribose 1-diphosphate site; these read GD, NVST, and KHGNRAVSG. G81 contributes to the anthranilate binding site. S93 contacts Mg(2+). Residue N112 participates in anthranilate binding. R167 contacts anthranilate. 2 residues coordinate Mg(2+): D226 and E227.

It belongs to the anthranilate phosphoribosyltransferase family. In terms of assembly, homodimer. Requires Mg(2+) as cofactor.

It carries out the reaction N-(5-phospho-beta-D-ribosyl)anthranilate + diphosphate = 5-phospho-alpha-D-ribose 1-diphosphate + anthranilate. Its pathway is amino-acid biosynthesis; L-tryptophan biosynthesis; L-tryptophan from chorismate: step 2/5. Functionally, catalyzes the transfer of the phosphoribosyl group of 5-phosphorylribose-1-pyrophosphate (PRPP) to anthranilate to yield N-(5'-phosphoribosyl)-anthranilate (PRA). This is Anthranilate phosphoribosyltransferase from Stutzerimonas stutzeri (strain A1501) (Pseudomonas stutzeri).